Reading from the N-terminus, the 273-residue chain is Diaminopimelate epimerase (273 aa).

Positions 11 and 60 each coordinate substrate. Catalysis depends on Cys-69, which acts as the Proton donor. Residues Gly-70 to Asn-71, Asn-181, and Glu-199 to Arg-200 each bind substrate. Cys-209 acts as the Proton acceptor in catalysis. Gly-210–Thr-211 is a binding site for substrate.

The protein belongs to the diaminopimelate epimerase family. In terms of assembly, homodimer.

It localises to the cytoplasm. The catalysed reaction is (2S,6S)-2,6-diaminopimelate = meso-2,6-diaminopimelate. It functions in the pathway amino-acid biosynthesis; L-lysine biosynthesis via DAP pathway; DL-2,6-diaminopimelate from LL-2,6-diaminopimelate: step 1/1. Its function is as follows. Catalyzes the stereoinversion of LL-2,6-diaminopimelate (L,L-DAP) to meso-diaminopimelate (meso-DAP), a precursor of L-lysine and an essential component of the bacterial peptidoglycan. This chain is Diaminopimelate epimerase, found in Helicobacter pylori (strain Shi470).